The chain runs to 503 residues: Transcription termination/antitermination protein NusA (503 aa).

Residues 139–203 form the S1 motif domain; that stretch reads GDIINGIVKR…KGPQIFLSRV (65 aa). The KH domain occupies 308–378; it reads SHKVEVVVSQ…LDVEEVIGQL (71 aa).

Belongs to the NusA family. As to quaternary structure, monomer. Binds directly to the core enzyme of the DNA-dependent RNA polymerase and to nascent RNA.

Its subcellular location is the cytoplasm. In terms of biological role, participates in both transcription termination and antitermination. The chain is Transcription termination/antitermination protein NusA from Rickettsia prowazekii (strain Madrid E).